Reading from the N-terminus, the 208-residue chain is Riboflavin synthase (208 aa).

Lumazine-binding repeat units follow at residues 1 to 97 and 98 to 195; these read MFTG…MGGH and IISG…VDTT. Residues 4 to 6, 48 to 50, 62 to 67, 101 to 103, Lys137, 146 to 148, and 160 to 165 contribute to the 2,4-dihydroxypteridine site; these read GIV, CLT, DIMKIT, GHI, SLT, and SIIPET.

Homotrimer.

The enzyme catalyses 2 6,7-dimethyl-8-(1-D-ribityl)lumazine + H(+) = 5-amino-6-(D-ribitylamino)uracil + riboflavin. It participates in cofactor biosynthesis; riboflavin biosynthesis; riboflavin from 2-hydroxy-3-oxobutyl phosphate and 5-amino-6-(D-ribitylamino)uracil: step 2/2. Functionally, catalyzes the dismutation of two molecules of 6,7-dimethyl-8-ribityllumazine, resulting in the formation of riboflavin and 5-amino-6-(D-ribitylamino)uracil. The chain is Riboflavin synthase (ribE) from Buchnera aphidicola subsp. Schizaphis graminum (strain Sg).